A 90-amino-acid chain; its full sequence is Small ribosomal subunit protein bS16 (90 aa).

This sequence belongs to the bacterial ribosomal protein bS16 family.

The chain is Small ribosomal subunit protein bS16 from Lactococcus lactis subsp. lactis (strain IL1403) (Streptococcus lactis).